A 255-amino-acid chain; its full sequence is Ras-like protein family member 12 (255 aa).

GTP-binding positions include 30–37 (GAMGSGKS), 77–81 (DTADQ), and 137–140 (NKVD).

The protein belongs to the small GTPase superfamily. Ras family.

The enzyme catalyses GTP + H2O = GDP + phosphate + H(+). This chain is Ras-like protein family member 12 (RASL12), found in Danio rerio (Zebrafish).